Reading from the N-terminus, the 418-residue chain is Actin-like protein C08B11.6 (418 aa).

The protein belongs to the actin family. ARP6 subfamily.

The protein localises to the cytoplasm. It localises to the cytoskeleton. The protein is Actin-like protein C08B11.6 (arp-6) of Caenorhabditis elegans.